A 131-amino-acid polypeptide reads, in one-letter code: Glycine cleavage system H protein (131 aa).

Residues 24–106 enclose the Lipoyl-binding domain; that stretch reads RAIVGISDHA…YGEGWIMVIE (83 aa). The residue at position 65 (Lys-65) is an N6-lipoyllysine.

The protein belongs to the GcvH family. The glycine cleavage system is composed of four proteins: P, T, L and H. (R)-lipoate is required as a cofactor.

In terms of biological role, the glycine cleavage system catalyzes the degradation of glycine. The H protein shuttles the methylamine group of glycine from the P protein to the T protein. This Xylella fastidiosa (strain 9a5c) protein is Glycine cleavage system H protein.